Reading from the N-terminus, the 427-residue chain is WD repeat and SOCS box-containing protein 1 (427 aa).

WD repeat units lie at residues 129 to 170 (SRSI…LLLN), 173 to 213 (DHTD…NMVK), 217 to 256 (GHPNRVYSSAFSPDSSVLCSVGASKAVLLWNMDKYTLIRK), 259 to 298 (GHHNDVVSCEFSPDGALLATASYDTRVIVWDHQRGSILLE), and 314 to 353 (ANDRWVRSVSFCADGRHIASVSDDRLVRFWSIEERAPQAV). An SOCS box domain is found at 379–427 (SVHFWECPRSIASLQHLCRMALRRVKTTQQVEALPVPMPLRDFLTYRVV).

As to quaternary structure, component of a probable ECS E3 ubiquitin-protein ligase complex that contains the Elongin BC complex.

Its pathway is protein modification; protein ubiquitination. Its function is as follows. Probable substrate-recognition component of a SCF-like ECS (Elongin-Cullin-SOCS-box protein) E3 ubiquitin-protein ligase complex which mediates the ubiquitination and subsequent proteasomal degradation of target proteins. The sequence is that of WD repeat and SOCS box-containing protein 1 (wsb1) from Takifugu rubripes (Japanese pufferfish).